Reading from the N-terminus, the 212-residue chain is Thymidylate kinase (212 aa).

G10–S17 contacts ATP.

The protein belongs to the thymidylate kinase family.

It carries out the reaction dTMP + ATP = dTDP + ADP. Phosphorylation of dTMP to form dTDP in both de novo and salvage pathways of dTTP synthesis. This Lactobacillus helveticus (strain DPC 4571) protein is Thymidylate kinase.